A 76-amino-acid polypeptide reads, in one-letter code: MSKGIHFEQSITELEEIVRQLEKGELTLEESLKQFEKGISLARRCQNALNQAEQKIETLTGTDSNIELDSDEQTSD.

The protein belongs to the XseB family. As to quaternary structure, heterooligomer composed of large and small subunits.

Its subcellular location is the cytoplasm. It carries out the reaction Exonucleolytic cleavage in either 5'- to 3'- or 3'- to 5'-direction to yield nucleoside 5'-phosphates.. Functionally, bidirectionally degrades single-stranded DNA into large acid-insoluble oligonucleotides, which are then degraded further into small acid-soluble oligonucleotides. The sequence is that of Exodeoxyribonuclease 7 small subunit from Legionella pneumophila (strain Paris).